The following is a 455-amino-acid chain: Probable alpha-galactosidase B (455 aa).

Residues 1-16 (MIEFLALITLISRANA) form the signal peptide. 2 disulfides stabilise this stretch: cysteine 39–cysteine 71 and cysteine 121–cysteine 151. A glycan (N-linked (GlcNAc...) asparagine) is linked at asparagine 42. The active-site Nucleophile is the aspartate 149. N-linked (GlcNAc...) asparagine glycans are attached at residues asparagine 177 and asparagine 192. 222 to 226 (NWGNA) contributes to the substrate binding site. Aspartate 244 functions as the Proton donor in the catalytic mechanism. Asparagine 395 carries an N-linked (GlcNAc...) asparagine glycan.

This sequence belongs to the glycosyl hydrolase 27 family.

The protein resides in the secreted. The catalysed reaction is Hydrolysis of terminal, non-reducing alpha-D-galactose residues in alpha-D-galactosides, including galactose oligosaccharides, galactomannans and galactolipids.. In terms of biological role, hydrolyzes a variety of simple alpha-D-galactoside as well as more complex molecules such as oligosaccharides and polysaccharides. This is Probable alpha-galactosidase B (aglB) from Emericella nidulans (strain FGSC A4 / ATCC 38163 / CBS 112.46 / NRRL 194 / M139) (Aspergillus nidulans).